The primary structure comprises 437 residues: Transcription factor E2F1 (437 aa).

Disordered regions lie at residues 42-87 (ASAP…GRPP) and 101-128 (LAES…KSRY). The cyclin A:CDK2 binding stretch occupies residues 67-108 (ATPQAPRPTPSAPRPALGRPPVKRRLDLETDHQYLAESSGPA). The segment at 89-191 (KRRLDLETDH…KKSKNHIQWL (103 aa)) is interaction with BIRC2/c-IAP1. Residues 110 to 194 (GRGRHPGKGV…KNHIQWLGSH (85 aa)) mediate DNA binding. Lys-117, Lys-120, and Lys-125 each carry N6-acetyllysine. A leucine-zipper region spans residues 153–174 (LNWAAEVLKVQKRRIYDITNVL). Positions 158-194 (EVLKVQKRRIYDITNVLEGIQLIAKKSKNHIQWLGSH) match the DEF box motif. Lys-185 is modified (N6-methyllysine; by SETD7). A required for interaction with TRIM28 region spans residues 192–382 (GSHTTVGVGG…RLSPLVAADS (191 aa)). Residues 195–284 (TTVGVGGRLE…AVDSSENFQI (90 aa)) form a dimerization region. Positions 300–349 (EETVGGISPGKTPSQEVTSEEENRATDSATIVSPPPSSPPSSLTTDPSQS) are disordered. Residues 339-349 (PSSLTTDPSQS) are compositionally biased toward low complexity. Ser-364 is modified (phosphoserine; by CHEK2). The tract at residues 368–437 (PVDEDRLSPL…DFGDLTPLDF (70 aa)) is transactivation. Ser-375 is subject to Phosphoserine. At Ser-403 the chain carries Phosphoserine; by GSK3-beta. The RB1 binding stretch occupies residues 409–426 (LDYHFGLEEGEGIRDLFD). Phosphothreonine; by GSK3-beta is present on Thr-433.

It belongs to the E2F/DP family. Component of the DRTF1/E2F transcription factor complex. Forms heterodimers with DP family members. The E2F1 complex binds specifically hypophosphorylated RB1, the interaction represses E2F1-driven transcription. During the cell cycle, RB1 becomes phosphorylated in mid-to-late G1 phase, detaches from the DRTF1/E2F complex, rendering E2F transcriptionally active. Viral oncoproteins, notably E1A, T-antigen and HPV E7, are capable of sequestering RB1, thus releasing the active complex. Interacts with TRRAP, which probably mediates its interaction with histone acetyltransferase complexes, leading to transcription activation. Binds TOPBP1 and EAPP. Interacts with ARID3A. Interacts with TRIM28; the interaction inhibits E2F1 acetylation through recruiting HDAC1 and represses its transcriptional activity. Interaction with KAT2B; the interaction acetylates E2F1 enhancing its DNA-binding and transcriptional activity. Interacts with BIRC2/c-IAP1 (via BIR domains). The complex TFDP1:E2F1 interacts with CEBPA; the interaction prevents CEBPA binding to target genes promoters and represses its transcriptional activity. Interacts with RRP1B. Interacts with HCFC1. Interacts with KMT2E; the interaction is probably indirect and is mediated via HCFC1. Interacts with DCAF5 and L3MBTL3; the interaction requires methylation at Lys-185 and is necessary to target E2F1 for ubiquitination by the CRL4-DCAF5 E3 ubiquitin ligase complex. As to quaternary structure, (Microbial infection) Interacts with human cytomegalovirus/HHV-5 protein UL123. Phosphorylated by CDK2 and cyclin A-CDK2 in the S-phase. Phosphorylation at Ser-364 by CHEK2 stabilizes E2F1 upon DNA damage and regulates its effect on transcription and apoptosis. Phosphorylation at Ser-403 by GSK3B promotes interaction with USP11, leading to its deubiquitination and stabilization. In terms of processing, ubiquitinated via 'Lys-63'-linked ubiquitin, leading to its degradation. Deubiquitinated by USP11 following phosphorylation by GSK3B, promoting its stability. Post-translationally, acetylation stimulates DNA-binding. Enhanced under stress conditions such as DNA damage and inhibited by retinoblastoma protein RB1. Regulated by KAP1/TRIM28 which recruits HDAC1 to E2F1 resulting in deacetylation. Acetylated by P/CAF/KAT2B. Methylation at Lys-185 by SETD7 promotes E2F1 ubiquitin-dependent proteasomal degradation.

It localises to the nucleus. BIRC2/c-IAP1 stimulates its transcriptional activity. Transcription activator that binds DNA cooperatively with DP proteins through the E2 recognition site, 5'-TTTC[CG]CGC-3' found in the promoter region of a number of genes whose products are involved in cell cycle regulation or in DNA replication. The DRTF1/E2F complex functions in the control of cell-cycle progression from G1 to S phase. E2F1 binds preferentially RB1 in a cell-cycle dependent manner. It can mediate both cell proliferation and TP53/p53-dependent apoptosis. Blocks adipocyte differentiation by binding to specific promoters repressing CEBPA binding to its target gene promoters. Directly activates transcription of PEG10. Positively regulates transcription of RRP1B. The sequence is that of Transcription factor E2F1 from Homo sapiens (Human).